The primary structure comprises 706 residues: Polyribonucleotide nucleotidyltransferase (706 aa).

Mg(2+)-binding residues include Asp-490 and Asp-496. The 60-residue stretch at 556–615 (PRIETMQIPTDKIREVIGSGGKVIREIVEVSGAKVDINDEGIIKIASPNGDSIQKAYDMI) folds into the KH domain. In terms of domain architecture, S1 motif spans 625-693 (GKIYKGKVVK…DRGKVRLAMK (69 aa)).

Belongs to the polyribonucleotide nucleotidyltransferase family. Mg(2+) is required as a cofactor.

The protein localises to the cytoplasm. The enzyme catalyses RNA(n+1) + phosphate = RNA(n) + a ribonucleoside 5'-diphosphate. Its function is as follows. Involved in mRNA degradation. Catalyzes the phosphorolysis of single-stranded polyribonucleotides processively in the 3'- to 5'-direction. The chain is Polyribonucleotide nucleotidyltransferase from Jannaschia sp. (strain CCS1).